Here is a 215-residue protein sequence, read N- to C-terminus: FMN-dependent NADH:quinone oxidoreductase (215 aa).

Ser17–Ser19 is an FMN binding site.

The protein belongs to the azoreductase type 1 family. In terms of assembly, homodimer. FMN is required as a cofactor.

The enzyme catalyses 2 a quinone + NADH + H(+) = 2 a 1,4-benzosemiquinone + NAD(+). It carries out the reaction N,N-dimethyl-1,4-phenylenediamine + anthranilate + 2 NAD(+) = 2-(4-dimethylaminophenyl)diazenylbenzoate + 2 NADH + 2 H(+). In terms of biological role, quinone reductase that provides resistance to thiol-specific stress caused by electrophilic quinones. Also exhibits azoreductase activity. Catalyzes the reductive cleavage of the azo bond in aromatic azo compounds to the corresponding amines. The sequence is that of FMN-dependent NADH:quinone oxidoreductase from Clostridium botulinum (strain Alaska E43 / Type E3).